Consider the following 489-residue polypeptide: Cytochrome P450-DIT2 (489 aa).

Cys435 is a binding site for heme.

It belongs to the cytochrome P450 family. Requires heme as cofactor.

In terms of biological role, involved in spore wall maturation. Thought to catalyze the oxidation of tyrosine residues in the formation of LL-dityrosine a precursor of the spore wall. This chain is Cytochrome P450-DIT2 (DIT2), found in Saccharomyces cerevisiae (strain ATCC 204508 / S288c) (Baker's yeast).